A 532-amino-acid chain; its full sequence is Light-independent protochlorophyllide reductase subunit B (532 aa).

Residue Asp-36 coordinates [4Fe-4S] cluster. Asp-282 acts as the Proton donor in catalysis. Gly-417 to Leu-418 is a binding site for substrate.

This sequence belongs to the ChlB/BchB/BchZ family. In terms of assembly, protochlorophyllide reductase is composed of three subunits; BchL, BchN and BchB. Forms a heterotetramer of two BchB and two BchN subunits. The cofactor is [4Fe-4S] cluster.

The enzyme catalyses chlorophyllide a + oxidized 2[4Fe-4S]-[ferredoxin] + 2 ADP + 2 phosphate = protochlorophyllide a + reduced 2[4Fe-4S]-[ferredoxin] + 2 ATP + 2 H2O. It functions in the pathway porphyrin-containing compound metabolism; bacteriochlorophyll biosynthesis (light-independent). In terms of biological role, component of the dark-operative protochlorophyllide reductase (DPOR) that uses Mg-ATP and reduced ferredoxin to reduce ring D of protochlorophyllide (Pchlide) to form chlorophyllide a (Chlide). This reaction is light-independent. The NB-protein (BchN-BchB) is the catalytic component of the complex. The polypeptide is Light-independent protochlorophyllide reductase subunit B (Methylobacterium radiotolerans (strain ATCC 27329 / DSM 1819 / JCM 2831 / NBRC 15690 / NCIMB 10815 / 0-1)).